The following is a 247-amino-acid chain: Phycobilisome rod-core linker polypeptide CpcG2 (247 aa).

Positions 11–189 (SSQNQRVPGY…YWRDKLENER (179 aa)) constitute a PBS-linker domain.

This sequence belongs to the phycobilisome linker protein family. In terms of assembly, the phycobilisome is a hemidiscoidal structure that is composed of two distinct substructures: a core complex and a number of rods radiating from the core.

It is found in the cellular thylakoid membrane. Its function is as follows. Rod-core linker protein required for attachment of phycocyanin to allophycocyanin in cores of phycobilisomes. In terms of biological role, linker polypeptides determine the state of aggregation and the location of the disk-shaped phycobiliprotein units within the phycobilisome and modulate their spectroscopic properties in order to mediate a directed and optimal energy transfer. This is Phycobilisome rod-core linker polypeptide CpcG2 (cpcG2) from Mastigocladus laminosus (Fischerella sp.).